A 192-amino-acid chain; its full sequence is Interleukin-18 (192 aa).

Positions 1-35 are excised as a propeptide; the sequence is MAAMSEDSCVNFKEMMFIDNTLYFIPEENGDLESD.

Belongs to the IL-1 family. Forms a ternary complex with ligand-binding receptor subunit IL18R1 and signaling receptor subunit IL18RAP at the plasma membrane. Mature IL18 first binds to IL18R1 forming a low affinity binary complex, which then interacts with IL18RAP to form a high affinity ternary complex that signals inside the cell. Interacts with cargo receptor TMED10; the interaction mediates the translocation from the cytoplasm into the ERGIC (endoplasmic reticulum-Golgi intermediate compartment) and thereby secretion. The pro-IL-18 precursor is processed by CASP1 to yield its mature, active form. The pro-IL-18 precursor is however not processed by Casp4/Casp11 in rodents. The pro-IL-18 precursor features autoinhibitory interactions between the propeptide and the post-cleavage-site region, preventing recognition by the IL18R1 receptor. Processing by CASP1 induces conformational changes to generate critical receptor-binding sites. The mature form is then secreted and released in the extracellular milieu by passing through the gasdermin-D (GSDMD) pore. In contrast, cleavage by CASP3 inactivates IL18.

The protein resides in the cytoplasm. It localises to the secreted. Its function is as follows. Pro-inflammatory cytokine primarily involved in epithelial barrier repair, polarized T-helper 1 (Th1) cell and natural killer (NK) cell immune responses. Upon binding to IL18R1 and IL18RAP, forms a signaling ternary complex which activates NF-kappa-B, triggering synthesis of inflammatory mediators. Synergizes with IL12/interleukin-12 to induce IFNG synthesis from T-helper 1 (Th1) cells and natural killer (NK) cells. Involved in transduction of inflammation downstream of pyroptosis: its mature form is specifically released in the extracellular milieu by passing through the gasdermin-D (GSDMD) pore. This is Interleukin-18 from Mus musculus (Mouse).